A 199-amino-acid chain; its full sequence is Elongation factor Ts (199 aa).

Positions 82-85 (TDFV) are involved in Mg(2+) ion dislocation from EF-Tu.

Belongs to the EF-Ts family.

It localises to the cytoplasm. In terms of biological role, associates with the EF-Tu.GDP complex and induces the exchange of GDP to GTP. It remains bound to the aminoacyl-tRNA.EF-Tu.GTP complex up to the GTP hydrolysis stage on the ribosome. This chain is Elongation factor Ts, found in Leptospira borgpetersenii serovar Hardjo-bovis (strain JB197).